A 325-amino-acid polypeptide reads, in one-letter code: tRNA (guanine-N(7)-)-methyltransferase (325 aa).

The interval 1–101 (MSEATDKQKQ…LEYPKSPESM (101 aa)) is disordered. Residues 51-69 (VSTTPEPEQSDSSATTATI) are compositionally biased toward polar residues. S-adenosyl-L-methionine-binding positions include Gly122, 145–146 (EI), 199–200 (NA), and Cys219. Asp222 is a catalytic residue. 297-299 (TEE) provides a ligand contact to S-adenosyl-L-methionine.

Belongs to the class I-like SAM-binding methyltransferase superfamily. TrmB family. In terms of assembly, forms a complex with TRM82.

It is found in the nucleus. The enzyme catalyses guanosine(46) in tRNA + S-adenosyl-L-methionine = N(7)-methylguanosine(46) in tRNA + S-adenosyl-L-homocysteine. The protein operates within tRNA modification; N(7)-methylguanine-tRNA biosynthesis. In terms of biological role, catalyzes the formation of N(7)-methylguanine at position 46 (m7G46) in tRNA. This chain is tRNA (guanine-N(7)-)-methyltransferase, found in Candida albicans (strain SC5314 / ATCC MYA-2876) (Yeast).